A 207-amino-acid chain; its full sequence is Large ribosomal subunit protein uL4 (207 aa).

The tract at residues 52 to 75 (KNRSAVRGGGKKPWRQKGTGRARQ) is disordered. Residues 60–71 (GGKKPWRQKGTG) show a composition bias toward basic residues.

It belongs to the universal ribosomal protein uL4 family. Part of the 50S ribosomal subunit.

Functionally, one of the primary rRNA binding proteins, this protein initially binds near the 5'-end of the 23S rRNA. It is important during the early stages of 50S assembly. It makes multiple contacts with different domains of the 23S rRNA in the assembled 50S subunit and ribosome. Its function is as follows. Forms part of the polypeptide exit tunnel. The polypeptide is Large ribosomal subunit protein uL4 (Limosilactobacillus fermentum (strain NBRC 3956 / LMG 18251) (Lactobacillus fermentum)).